We begin with the raw amino-acid sequence, 1836 residues long: Druantia protein DruE (1836 aa).

A Helicase ATP-binding domain is found at 108-405 (SFLGEDASDL…FAQDLTGLSP (298 aa)). 121–128 (TGTGSGKT) is an ATP binding site. The DEAH box signature appears at 347 to 350 (DEAH). Positions 1014-1199 (DCTALMPFAL…EVKVNNPKIA (186 aa)) constitute a Helicase C-terminal domain.

Its subcellular location is the cytoplasm. In terms of biological role, component of antiviral defense system Druantia type I, composed of DruA, DruB, DruC, DruD and DruE. Expression of Druantia in E.coli (strain MG1655) confers resistance to phage lambda, SECphi18, SECphi27 and T4. This protein is probably a helicase. In Escherichia coli (strain UMEA 4076-1), this protein is Druantia protein DruE.